The sequence spans 150 residues: MLGAALRRCAVAATARAGPRGLLHSAPTPGPAAAIQSVRCYSHGSSETDEEFDARWVTYFNKPDIDAWELRKGINTLVTYDLVPEPKIIDAALRACRRLNDFASTVRILEAVKDKAGPHKEIYPYVIQELRPTLNELGISTPEELGLDKV.

The transit peptide at 1–41 (MLGAALRRCAVAATARAGPRGLLHSAPTPGPAAAIQSVRCY) directs the protein to the mitochondrion. The SIFI-degron motif lies at 2–17 (LGAALRRCAVAATARA). Lys87 and Lys113 each carry N6-acetyllysine. The residue at position 141 (Thr141) is a Phosphothreonine.

Belongs to the cytochrome c oxidase subunit 5A family. In terms of assembly, component of the cytochrome c oxidase (complex IV, CIV), a multisubunit enzyme composed of 14 subunits. The complex is composed of a catalytic core of 3 subunits MT-CO1, MT-CO2 and MT-CO3, encoded in the mitochondrial DNA, and 11 supernumerary subunits COX4I, COX5A, COX5B, COX6A, COX6B, COX6C, COX7A, COX7B, COX7C, COX8 and NDUFA4, which are encoded in the nuclear genome. The complex exists as a monomer or a dimer and forms supercomplexes (SCs) in the inner mitochondrial membrane with NADH-ubiquinone oxidoreductase (complex I, CI) and ubiquinol-cytochrome c oxidoreductase (cytochrome b-c1 complex, complex III, CIII), resulting in different assemblies (supercomplex SCI(1)III(2)IV(1) and megacomplex MCI(2)III(2)IV(2)). Interacts with AFG1L. Interacts with RAB5IF. In response to mitochondrial stress, the precursor protein is ubiquitinated by the SIFI complex in the cytoplasm before mitochondrial import, leading to its degradation. Within the SIFI complex, UBR4 initiates ubiquitin chain that are further elongated or branched by KCMF1.

It is found in the mitochondrion inner membrane. It participates in energy metabolism; oxidative phosphorylation. Its function is as follows. Component of the cytochrome c oxidase, the last enzyme in the mitochondrial electron transport chain which drives oxidative phosphorylation. The respiratory chain contains 3 multisubunit complexes succinate dehydrogenase (complex II, CII), ubiquinol-cytochrome c oxidoreductase (cytochrome b-c1 complex, complex III, CIII) and cytochrome c oxidase (complex IV, CIV), that cooperate to transfer electrons derived from NADH and succinate to molecular oxygen, creating an electrochemical gradient over the inner membrane that drives transmembrane transport and the ATP synthase. Cytochrome c oxidase is the component of the respiratory chain that catalyzes the reduction of oxygen to water. Electrons originating from reduced cytochrome c in the intermembrane space (IMS) are transferred via the dinuclear copper A center (CU(A)) of subunit 2 and heme A of subunit 1 to the active site in subunit 1, a binuclear center (BNC) formed by heme A3 and copper B (CU(B)). The BNC reduces molecular oxygen to 2 water molecules using 4 electrons from cytochrome c in the IMS and 4 protons from the mitochondrial matrix. This Cebuella pygmaea (Pygmy marmoset) protein is Cytochrome c oxidase subunit 5A, mitochondrial (COX5A).